The primary structure comprises 295 residues: 4-hydroxy-tetrahydrodipicolinate synthase (295 aa).

Threonine 48 is a binding site for pyruvate. The active-site Proton donor/acceptor is tyrosine 135. The active-site Schiff-base intermediate with substrate is the lysine 163. Residue valine 204 participates in pyruvate binding.

It belongs to the DapA family. As to quaternary structure, homotetramer; dimer of dimers.

The protein resides in the cytoplasm. The enzyme catalyses L-aspartate 4-semialdehyde + pyruvate = (2S,4S)-4-hydroxy-2,3,4,5-tetrahydrodipicolinate + H2O + H(+). The protein operates within amino-acid biosynthesis; L-lysine biosynthesis via DAP pathway; (S)-tetrahydrodipicolinate from L-aspartate: step 3/4. Catalyzes the condensation of (S)-aspartate-beta-semialdehyde [(S)-ASA] and pyruvate to 4-hydroxy-tetrahydrodipicolinate (HTPA). The polypeptide is 4-hydroxy-tetrahydrodipicolinate synthase (Francisella philomiragia subsp. philomiragia (strain ATCC 25017 / CCUG 19701 / FSC 153 / O#319-036)).